Here is a 461-residue protein sequence, read N- to C-terminus: GTPase Der (461 aa).

2 EngA-type G domains span residues 2–166 (IKVA…PKKP) and 199–370 (IKVA…KNYS). Residues 8–15 (GKPNVGKS), 57–61 (DTGGL), 118–121 (NKID), 205–212 (GRVNVGKS), 252–256 (DTAGI), and 316–319 (NKWD) contribute to the GTP site. In terms of domain architecture, KH-like spans 371–455 (KRIPTATLNK…PIIFVARKKG (85 aa)).

Belongs to the TRAFAC class TrmE-Era-EngA-EngB-Septin-like GTPase superfamily. EngA (Der) GTPase family. Associates with the 50S ribosomal subunit.

Functionally, GTPase that plays an essential role in the late steps of ribosome biogenesis. The protein is GTPase Der of Nautilia profundicola (strain ATCC BAA-1463 / DSM 18972 / AmH).